The sequence spans 327 residues: Phenylalanine--tRNA ligase alpha subunit (327 aa).

Glu252 provides a ligand contact to Mg(2+).

Belongs to the class-II aminoacyl-tRNA synthetase family. Phe-tRNA synthetase alpha subunit type 1 subfamily. As to quaternary structure, tetramer of two alpha and two beta subunits. Mg(2+) is required as a cofactor.

The protein localises to the cytoplasm. It carries out the reaction tRNA(Phe) + L-phenylalanine + ATP = L-phenylalanyl-tRNA(Phe) + AMP + diphosphate + H(+). In Shewanella frigidimarina (strain NCIMB 400), this protein is Phenylalanine--tRNA ligase alpha subunit.